A 407-amino-acid polypeptide reads, in one-letter code: MAAATASSQLIFSKPYSPSRLCPFQLCVFDAKSVLSSSRRKHVNGSGVRCMAVKEATSETKKRSGYEIITLTSWLLQQEQKGIIDAELTIVLSSISMACKQIASLVQRANISNLTGTQGAVNIQGEDQKKLDVISNEVFSNCLRSSGRTGIIASEEEDVAVAVEESYSGNYIVVFDPLDGSSNLDAAVSTGSIFGIYSPNDECLPDFGDDSDDNTLGTEEQRCIVNVCQPGSNLLAAGYCMYSSSVAFVLTIGKGVFVFTLDPLYGEFVLTQENLQIPKSGEIYSFNEGNYKLWDENLKKYIDDLKEPGPSGKPYSARYIGSLVGDFHRTLLYGGIYGYPRDKKSKNGKLRLLYECAPMSFIVEQAGGKGSDGHQRVLDIQPTEIHQRVPLYIGSTEEVEKVEKYLA.

Residues 1–50 (MAAATASSQLIFSKPYSPSRLCPFQLCVFDAKSVLSSSRRKHVNGSGVRC) constitute a chloroplast transit peptide. Residues Glu126, Glu155, Asp176, Leu178, and Asp179 each contribute to the Mg(2+) site. 179 to 182 (DGSS) serves as a coordination point for substrate. Residues Cys203 and Cys223 are joined by a disulfide bond. Asn287, Tyr319, Tyr337, Tyr339, and Lys349 together coordinate substrate. Glu355 serves as a coordination point for Mg(2+).

The protein belongs to the FBPase class 1 family. Homotetramer. Mg(2+) serves as cofactor.

Its subcellular location is the plastid. It is found in the chloroplast stroma. The enzyme catalyses beta-D-fructose 1,6-bisphosphate + H2O = beta-D-fructose 6-phosphate + phosphate. Its pathway is carbohydrate biosynthesis; Calvin cycle. This is Fructose-1,6-bisphosphatase, chloroplastic (FBP) from Pisum sativum (Garden pea).